A 1612-amino-acid chain; its full sequence is DNA topoisomerase 2-beta (1612 aa).

At A2 the chain carries N-acetylalanine. At K3 the chain carries N6-acetyllysine. Glycyl lysine isopeptide (Lys-Gly) (interchain with G-Cter in SUMO2) cross-links involve residues K21 and K22. Residues N100, N129, and 157–159 (SSN) each bind ATP. Glycyl lysine isopeptide (Lys-Gly) (interchain with G-Cter in SUMO2) cross-links involve residues K165 and K166. Residue 170–177 (GRNGYGAK) coordinates ATP. Glycyl lysine isopeptide (Lys-Gly) (interchain with G-Cter in SUMO2) cross-links involve residues K216 and K287. The interval 351–353 (KKK) is interaction with DNA. Residues K355 and K361 each participate in a glycyl lysine isopeptide (Lys-Gly) (interchain with G-Cter in SUMO2) cross-link. 385 to 387 (QTK) is a binding site for ATP. Glycyl lysine isopeptide (Lys-Gly) (interchain with G-Cter in SUMO2) cross-links involve residues K425, K427, and K434. A Toprim domain is found at 464 to 581 (CTLILTEGDS…SLLKHGFLEE (118 aa)). Mg(2+) is bound by residues E470, D550, and D552. Glycyl lysine isopeptide (Lys-Gly) (interchain with G-Cter in SUMO2) cross-links involve residues K588, K593, K623, K631, K634, K664, and K700. The Topo IIA-type catalytic domain maps to 724 to 1177 (IPSLVDGFKP…SPSDLWKEDL (454 aa)). Y814 (O-(5'-phospho-DNA)-tyrosine intermediate) is an active-site residue. An interaction with DNA region spans residues 999 to 1008 (KLQTTLTCNS). K1080 participates in a covalent cross-link: Glycyl lysine isopeptide (Lys-Gly) (interchain with G-Cter in SUMO2). Positions 1098 to 1128 (AWKEAQEKAAEEEDTQNQHDDSSSDSGTPSG) are disordered. Glycyl lysine isopeptide (Lys-Gly) (interchain with G-Cter in SUMO2) cross-links involve residues K1202, K1205, K1214, and K1215. Residue S1224 is modified to Phosphoserine. Residues K1238, K1250, and K1259 each participate in a glycyl lysine isopeptide (Lys-Gly) (interchain with G-Cter in SUMO2) cross-link. Residues 1245-1586 (LLKKKKGDPD…FTSEPPALPR (342 aa)) are disordered. T1280 carries the post-translational modification Phosphothreonine. Residues K1311 and K1315 each participate in a glycyl lysine isopeptide (Lys-Gly) (interchain with G-Cter in SUMO2) cross-link. 2 stretches are compositionally biased toward basic and acidic residues: residues 1322-1332 (PWSDDESKSES) and 1346-1358 (SLLR…RPKY). Residues S1324, S1328, S1330, S1332, and S1346 each carry the phosphoserine modification. A Phosphotyrosine modification is found at Y1358. Over residues 1362 to 1379 (FSEEEEEDADDDDDNNDL) the composition is skewed to acidic residues. S1363 carries the post-translational modification Phosphoserine. A Glycyl lysine isopeptide (Lys-Gly) (interchain with G-Cter in SUMO2) cross-link involves residue K1385. Residue S1387 is modified to Phosphoserine. Residue T1390 is modified to Phosphothreonine. A Phosphoserine modification is found at S1400. A Phosphotyrosine modification is found at Y1408. S1411 is modified (phosphoserine). The span at 1417–1429 (ATPEKSSHDKKSQ) shows a compositional bias: basic and acidic residues. Residue K1427 forms a Glycyl lysine isopeptide (Lys-Gly) (interchain with G-Cter in SUMO2) linkage. A phosphoserine mark is found at S1428, S1439, and S1441. Residue K1443 forms a Glycyl lysine isopeptide (Lys-Gly) (interchain with G-Cter in SUMO2) linkage. Positions 1443 to 1453 (KSEDDSAKFDS) are enriched in basic and acidic residues. 3 positions are modified to phosphoserine: S1448, S1453, and S1460. A Glycyl lysine isopeptide (Lys-Gly) (interchain with G-Cter in SUMO2) cross-link involves residue K1477. The segment at 1493–1499 (KAKRAPK) is interaction with PLSCR1. 3 positions are modified to phosphoserine: S1509, S1511, and S1513. Residues 1526–1536 (GKGRGAKKRKA) are compositionally biased toward basic residues. Residues S1537 and S1539 each carry the phosphoserine modification. Residues 1550 to 1561 (KPSKTASKKPKK) are compositionally biased toward basic residues. T1562 bears the Phosphothreonine mark. S1563 and S1568 each carry phosphoserine. Residue Y1596 is modified to Phosphotyrosine. Position 1600 is a phosphoserine (S1600).

The protein belongs to the type II topoisomerase family. As to quaternary structure, homodimer. Interacts with PLSCR1 and KIAA1210. Requires Mg(2+) as cofactor. Mn(2+) is required as a cofactor. Ca(2+) serves as cofactor.

The protein resides in the nucleus. Its subcellular location is the nucleolus. It is found in the nucleoplasm. It carries out the reaction ATP-dependent breakage, passage and rejoining of double-stranded DNA.. In terms of biological role, key decatenating enzyme that alters DNA topology by binding to two double-stranded DNA molecules, generating a double-stranded break in one of the strands, passing the intact strand through the broken strand, and religating the broken strand. The protein is DNA topoisomerase 2-beta (TOP2B) of Cricetulus longicaudatus (Long-tailed dwarf hamster).